A 493-amino-acid polypeptide reads, in one-letter code: GTPase Der (493 aa).

An EngA-type G 1 domain is found at 3–166 (PVIALVGRPN…EALGIFPKDN (164 aa)). GTP contacts are provided by residues 9–16 (GRPNVGKS), 56–60 (DTGGI), and 118–121 (NKVD). Residues 167–184 (VEEEGEGEPASEEVAEGE) are compositionally biased toward acidic residues. The segment at 167-195 (VEEEGEGEPASEEVAEGEEPTRIPGPSEK) is disordered. Positions 198–371 (IKIAIIGRPN…SVQESFRSAV (174 aa)) constitute an EngA-type G 2 domain. GTP-binding positions include 204–211 (GRPNVGKS), 251–255 (DTAGV), and 316–319 (NKWD). Residues 372–456 (TRWPTSRLTS…PIRIEYKGGE (85 aa)) enclose the KH-like domain. The segment covering 454–463 (GGENPYEGKK) has biased composition (basic and acidic residues). Positions 454-493 (GGENPYEGKKNSLTARQVNKKRRLMSHHKKAEKKKKDKRR) are disordered. Residues 471–493 (VNKKRRLMSHHKKAEKKKKDKRR) show a composition bias toward basic residues.

Belongs to the TRAFAC class TrmE-Era-EngA-EngB-Septin-like GTPase superfamily. EngA (Der) GTPase family. In terms of assembly, associates with the 50S ribosomal subunit.

GTPase that plays an essential role in the late steps of ribosome biogenesis. This Pseudomonas aeruginosa (strain LESB58) protein is GTPase Der.